We begin with the raw amino-acid sequence, 338 residues long: Sesquiterpene synthase 2 (338 aa).

Mg(2+) is bound by residues Asp93, Asn228, Ser232, and Glu236. Residues 93–97 (DNISD) carry the DDXXD motif motif. The NSE/DTE motif motif lies at 228–236 (NDIFSYNVE). The (2E,6E)-farnesyl diphosphate site is built by Arg316 and Tyr317.

This sequence belongs to the terpene synthase family. Requires Mg(2+) as cofactor.

It carries out the reaction (2E,6E)-farnesyl diphosphate = alpha-copaene + diphosphate. The enzyme catalyses (2E,6E)-farnesyl diphosphate = beta-copaene + diphosphate. It catalyses the reaction (2E,6E)-farnesyl diphosphate = alpha-muurolene + diphosphate. The catalysed reaction is (2E,6E)-farnesyl diphosphate = gamma-muurolene + diphosphate. It carries out the reaction (2E,6E)-farnesyl diphosphate = delta-cadinene + diphosphate. Its function is as follows. Terpene cyclase that catalyzes the cyclization of farnesyl diphosphate (FPP) to various sesquiterpenes, including alpha-copaene, beta-copaene, beta-elemene, alpha-muurolene, gamma-muurolene and delta-cadinene. In Postia placenta (strain ATCC 44394 / Madison 698-R) (Brown rot fungus), this protein is Sesquiterpene synthase 2.